We begin with the raw amino-acid sequence, 140 residues long: Large ribosomal subunit protein uL14 (140 aa).

Belongs to the universal ribosomal protein uL14 family. In terms of assembly, component of the large ribosomal subunit.

The protein localises to the cytoplasm. In terms of biological role, component of the large ribosomal subunit. The ribosome is a large ribonucleoprotein complex responsible for the synthesis of proteins in the cell. The protein is Large ribosomal subunit protein uL14 (rpl23) of Danio rerio (Zebrafish).